Consider the following 452-residue polypeptide: Probable M18 family aminopeptidase 1 (452 aa).

His-93, His-168, and His-427 together coordinate Zn(2+).

The protein belongs to the peptidase M18 family. Requires Zn(2+) as cofactor.

This chain is Probable M18 family aminopeptidase 1 (apeA), found in Thermotoga neapolitana.